The sequence spans 235 residues: Golgi to ER traffic protein 1 (235 aa).

M1 is a topological domain (lumenal). A helical transmembrane segment spans residues 2-21; the sequence is HWAAAVAIFFIVVTKFLQYT. Topologically, residues 22–104 are cytoplasmic; that stretch reads NKYHEKWISK…AFQAHLHKLR (83 aa). Positions 68–104 form a coiled coil; that stretch reads WTKNNRKLDSLDKEINNLKDEIQSENKAFQAHLHKLR. Residues 105 to 125 form a helical membrane-spanning segment; sequence LLALTVPFFVFKIMYGKTPVY. Residues 126 to 181 lie on the Lumenal side of the membrane; sequence KLSSSTSTLFPTFVSGVWSQGWLYVLLHPLRTISQKWHIMEGKFGASKFDDMALQS. The helical transmembrane segment at 182–198 threads the bilayer; sequence VSLGIWVWALMNVINGV. Topologically, residues 199 to 235 are cytoplasmic; the sequence is EFIVKQLFLTPKMEAPASVETQEEKALDAVDDAIILD.

It belongs to the WRB/GET1 family. As to quaternary structure, component of the Golgi to ER traffic (GET) complex, which is composed of GET1, GET2 and GET3. Within the complex, GET1 and GET2 form a heterotetramer which is stabilized by phosphatidylinositol binding and which binds to the GET3 homodimer.

The protein resides in the endoplasmic reticulum membrane. The protein localises to the golgi apparatus membrane. Functionally, required for the post-translational delivery of tail-anchored (TA) proteins to the endoplasmic reticulum. Together with GET2, acts as a membrane receptor for soluble GET3, which recognizes and selectively binds the transmembrane domain of TA proteins in the cytosol. The GET complex cooperates with the HDEL receptor ERD2 to mediate the ATP-dependent retrieval of resident ER proteins that contain a C-terminal H-D-E-L retention signal from the Golgi to the ER. In Saccharomyces cerevisiae (strain RM11-1a) (Baker's yeast), this protein is Golgi to ER traffic protein 1.